We begin with the raw amino-acid sequence, 359 residues long: Peptide chain release factor 1 (359 aa).

Gln-236 is modified (N5-methylglutamine).

The protein belongs to the prokaryotic/mitochondrial release factor family. In terms of processing, methylated by PrmC. Methylation increases the termination efficiency of RF1.

The protein localises to the cytoplasm. Peptide chain release factor 1 directs the termination of translation in response to the peptide chain termination codons UAG and UAA. This is Peptide chain release factor 1 from Streptococcus agalactiae serotype Ia (strain ATCC 27591 / A909 / CDC SS700).